A 263-amino-acid chain; its full sequence is Stress-response A/B barrel domain-containing protein UP3 (263 aa).

2 consecutive Stress-response A/B barrel domains span residues 49–142 (IEHI…AVDW) and 158–252 (VAKL…VVEF). Residues 261-263 (SSL) carry the Peroxisomal targeting signal motif.

Homodimer.

The protein resides in the peroxisome. Involved in stress response. This Arabidopsis thaliana (Mouse-ear cress) protein is Stress-response A/B barrel domain-containing protein UP3.